A 286-amino-acid chain; its full sequence is Prohibitin-2, mitochondrial (286 aa).

Topologically, residues M1–P13 are mitochondrial matrix. A helical; Signal-anchor for type II membrane protein membrane pass occupies residues A14–L32. At T33–K286 the chain is on the mitochondrial intermembrane side. Positions K186–A219 form a coiled coil.

It belongs to the prohibitin family. As to quaternary structure, component of a prohibitin multimeric complex in mitochondrial membranes. Mostly expressed in proliferative tissues, including vasculature, shoot and root apical tissues.

It is found in the mitochondrion inner membrane. Functionally, prohibitin probably acts as a holdase/unfoldase for the stabilization of newly synthesized mitochondrial proteins. In Arabidopsis thaliana (Mouse-ear cress), this protein is Prohibitin-2, mitochondrial (PHB2).